Reading from the N-terminus, the 119-residue chain is Large ribosomal subunit protein uL14 (119 aa).

It belongs to the universal ribosomal protein uL14 family. In terms of assembly, part of the 50S ribosomal subunit. Forms a cluster with proteins L3 and L19. In the 70S ribosome, L14 and L19 interact and together make contacts with the 16S rRNA in bridges B5 and B8.

Binds to 23S rRNA. Forms part of two intersubunit bridges in the 70S ribosome. This Anaplasma marginale (strain St. Maries) protein is Large ribosomal subunit protein uL14.